Reading from the N-terminus, the 92-residue chain is Small ribosomal subunit protein uS19c (92 aa).

It belongs to the universal ribosomal protein uS19 family.

It localises to the plastid. It is found in the chloroplast. In terms of biological role, protein S19 forms a complex with S13 that binds strongly to the 16S ribosomal RNA. The chain is Small ribosomal subunit protein uS19c from Populus alba (White poplar).